A 463-amino-acid polypeptide reads, in one-letter code: Succinate--CoA ligase [ADP-forming] subunit beta, mitochondrial (463 aa).

The N-terminal 52 residues, 1–52 (MAASMFYGRLVAVATLRNHRPRTAQRAAAQVLGSSGLFNNHGLQVQQQQQRN), are a transit peptide targeting the mitochondrion. An ATP-grasp domain is found at 61–288 (MELLQEAGVS…SNSAYRQKKI (228 aa)). N6-acetyllysine is present on Lys78. Tyr84 carries the phosphotyrosine modification. At Lys88 the chain carries N6-acetyllysine; alternate. Lys88 carries the N6-succinyllysine; alternate modification. ATP is bound by residues Lys98 and 105–107 (GRG). N6-acetyllysine is present on residues Lys129, Lys139, Lys143, and Lys216. Mg(2+)-binding residues include Asn258 and Asp272. Residue Ser279 is modified to Phosphoserine. Position 323 (Asn323) interacts with substrate. Thr341 carries the phosphothreonine modification. Lys368 is modified (N6-acetyllysine). A substrate-binding site is contributed by 380 to 382 (GIM).

This sequence belongs to the succinate/malate CoA ligase beta subunit family. ATP-specific subunit beta subfamily. As to quaternary structure, heterodimer of an alpha and a beta subunit. The beta subunit determines specificity for ATP. Interacts with ALAS2. Requires Mg(2+) as cofactor. Widely expressed. Not expressed in liver and lung.

It localises to the mitochondrion. It catalyses the reaction succinate + ATP + CoA = succinyl-CoA + ADP + phosphate. It participates in carbohydrate metabolism; tricarboxylic acid cycle; succinate from succinyl-CoA (ligase route): step 1/1. Inhibited by itaconate. Functionally, ATP-specific succinyl-CoA synthetase functions in the citric acid cycle (TCA), coupling the hydrolysis of succinyl-CoA to the synthesis of ATP and thus represents the only step of substrate-level phosphorylation in the TCA. The beta subunit provides nucleotide specificity of the enzyme and binds the substrate succinate, while the binding sites for coenzyme A and phosphate are found in the alpha subunit. The polypeptide is Succinate--CoA ligase [ADP-forming] subunit beta, mitochondrial (Homo sapiens (Human)).